The following is a 228-amino-acid chain: PKHD-type hydroxylase Rmet_3078 (228 aa).

The Fe2OG dioxygenase domain maps to 80 to 180 (IVYPPMFNRY…RVGCFFWIQS (101 aa)). Positions 98, 100, and 161 each coordinate Fe cation. Arg171 is a 2-oxoglutarate binding site.

Fe(2+) is required as a cofactor. L-ascorbate serves as cofactor.

The sequence is that of PKHD-type hydroxylase Rmet_3078 from Cupriavidus metallidurans (strain ATCC 43123 / DSM 2839 / NBRC 102507 / CH34) (Ralstonia metallidurans).